Consider the following 100-residue polypeptide: Small ribosomal subunit protein eS24 (100 aa).

The protein belongs to the eukaryotic ribosomal protein eS24 family.

The sequence is that of Small ribosomal subunit protein eS24 from Methanothermobacter thermautotrophicus (strain ATCC 29096 / DSM 1053 / JCM 10044 / NBRC 100330 / Delta H) (Methanobacterium thermoautotrophicum).